The sequence spans 294 residues: 4-hydroxy-tetrahydrodipicolinate synthase (294 aa).

Pyruvate is bound at residue T47. Y135 (proton donor/acceptor) is an active-site residue. Residue K163 is the Schiff-base intermediate with substrate of the active site. T205 provides a ligand contact to pyruvate.

Belongs to the DapA family. Homotetramer; dimer of dimers.

Its subcellular location is the cytoplasm. The enzyme catalyses L-aspartate 4-semialdehyde + pyruvate = (2S,4S)-4-hydroxy-2,3,4,5-tetrahydrodipicolinate + H2O + H(+). It functions in the pathway amino-acid biosynthesis; L-lysine biosynthesis via DAP pathway; (S)-tetrahydrodipicolinate from L-aspartate: step 3/4. Functionally, catalyzes the condensation of (S)-aspartate-beta-semialdehyde [(S)-ASA] and pyruvate to 4-hydroxy-tetrahydrodipicolinate (HTPA). In Rickettsia africae (strain ESF-5), this protein is 4-hydroxy-tetrahydrodipicolinate synthase.